The primary structure comprises 175 residues: MGLSLEQKKAMVQEVAAVAQEALTAVSAEYRGLTAGEMDQLRAQAREQGVYLRVVKNTLARRAVAGTEFECMTEGFYGPLLLAFSQDDPGAAARLVRDFRKKNESLVVRNVAFGGTLYGPEHLDRLASLPTRDEALSKLMATMRAPVQKLATTTNEVPGKLVRTLAAVRDAKEAA.

It belongs to the universal ribosomal protein uL10 family. Part of the ribosomal stalk of the 50S ribosomal subunit. The N-terminus interacts with L11 and the large rRNA to form the base of the stalk. The C-terminus forms an elongated spine to which L12 dimers bind in a sequential fashion forming a multimeric L10(L12)X complex.

Forms part of the ribosomal stalk, playing a central role in the interaction of the ribosome with GTP-bound translation factors. The polypeptide is Large ribosomal subunit protein uL10 (Halorhodospira halophila (strain DSM 244 / SL1) (Ectothiorhodospira halophila (strain DSM 244 / SL1))).